A 143-amino-acid chain; its full sequence is Large-conductance mechanosensitive channel (143 aa).

Transmembrane regions (helical) follow at residues 10–30, 40–60, and 86–106; these read FAVK…GAFG, VIMP…LFLV, and GSFI…FMMV.

The protein belongs to the MscL family. In terms of assembly, homopentamer.

It localises to the cell inner membrane. Functionally, channel that opens in response to stretch forces in the membrane lipid bilayer. May participate in the regulation of osmotic pressure changes within the cell. In Paracidovorax citrulli (strain AAC00-1) (Acidovorax citrulli), this protein is Large-conductance mechanosensitive channel.